The chain runs to 224 residues: Lipoprotein-releasing system ATP-binding protein LolD (224 aa).

An ABC transporter domain is found at 5 to 224 (LEILDVSKCY…SLSGGMLTEL (220 aa)). ATP is bound at residue 40-47 (GSSGSGKS).

The protein belongs to the ABC transporter superfamily. Lipoprotein translocase (TC 3.A.1.125) family. As to quaternary structure, the complex is composed of two ATP-binding proteins (LolD) and two transmembrane proteins (LolC and LolE).

It localises to the cell inner membrane. In terms of biological role, part of the ABC transporter complex LolCDE involved in the translocation of mature outer membrane-directed lipoproteins, from the inner membrane to the periplasmic chaperone, LolA. Responsible for the formation of the LolA-lipoprotein complex in an ATP-dependent manner. The polypeptide is Lipoprotein-releasing system ATP-binding protein LolD (Anaplasma marginale (strain St. Maries)).